The chain runs to 557 residues: Intraflagellar transport protein 56 (557 aa).

Positions methionine 1–isoleucine 30 are disordered. Residues lysine 21 to isoleucine 30 show a composition bias toward basic residues. 4 TPR repeats span residues glutamate 60 to proline 93, aspartate 95 to arginine 128, threonine 154 to phenylalanine 187, and alanine 471 to arginine 504.

Belongs to the IFT56 family. Component of the IFT complex B.

The protein resides in the cell projection. It localises to the cilium. Functionally, component of the intraflagellar transport (IFT) complex B required for transport of proteins in the motile cilium. Required for transport of specific ciliary cargo proteins related to motility, while it is neither required for IFT complex B assembly or motion nor for cilium assembly. Plays a key role in maintaining the integrity of the IFT complex B and the proper ciliary localization of the IFT complex B components. Essential for maintaining proper microtubule organization within the ciliary axoneme. In Danio rerio (Zebrafish), this protein is Intraflagellar transport protein 56.